The sequence spans 114 residues: ATP-dependent Clp protease adapter protein ClpS (114 aa).

It belongs to the ClpS family. Binds to the N-terminal domain of the chaperone ClpA.

In terms of biological role, involved in the modulation of the specificity of the ClpAP-mediated ATP-dependent protein degradation. The polypeptide is ATP-dependent Clp protease adapter protein ClpS (Bdellovibrio bacteriovorus (strain ATCC 15356 / DSM 50701 / NCIMB 9529 / HD100)).